Reading from the N-terminus, the 390-residue chain is Levoglucosan dehydrogenase (390 aa).

Residues Phe-13, Met-14, Glu-43, Thr-81, Asn-83, His-86, Glu-103, Lys-104, Ala-130, and Asn-132 each contribute to the NADH site. Lys-104 is a levoglucosan binding site. Levoglucosan contacts are provided by Tyr-133 and Gln-163. NADH contacts are provided by Trp-175 and Arg-176. Residues Arg-176, Asp-189, and His-193 each contribute to the levoglucosan site. NADH is bound at residue Tyr-335.

This sequence belongs to the Gfo/Idh/MocA family. In terms of assembly, homotetramer.

It catalyses the reaction levoglucosan + NAD(+) = 3-dehydrolevoglucosan + NADH + H(+). Functionally, catalyzes the oxidation of levoglucosan (1,6-anhydro-beta-D-glucose, LG) to 3-dehydrolevoglucosan (3-keto-LG). Exhibits high substrate specificity toward levoglucosan and NAD(+) for the oxidative reaction. Exhibits weak activities (about 4% compared with that of LG) toward L-sorbose and 1,5-anhydro-D-glucitol, and activity toward D-xylose is also detectable (1.7%). Can also efficiently catalyzes the NADH-dependent reduction (reverse reaction) of 3-keto-LG. This is Levoglucosan dehydrogenase from Pseudarthrobacter phenanthrenivorans (strain DSM 18606 / JCM 16027 / LMG 23796 / Sphe3) (Arthrobacter phenanthrenivorans).